We begin with the raw amino-acid sequence, 184 residues long: UPF0149 protein PputW619_5026 (184 aa).

Belongs to the UPF0149 family.

This chain is UPF0149 protein PputW619_5026, found in Pseudomonas putida (strain W619).